The chain runs to 382 residues: uncharacterized protein (382 aa).

The next 12 helical transmembrane spans lie at V8–L28, M45–I65, Y75–W95, F102–S122, L131–S151, L157–F177, L204–P224, G231–G251, V270–P290, A291–C311, A325–M345, and S349–L369.

Belongs to the major facilitator superfamily. YcaD (TC 2.A.1.26) family.

It localises to the cell inner membrane. This is an uncharacterized protein from Salmonella paratyphi B (strain ATCC BAA-1250 / SPB7).